Reading from the N-terminus, the 251-residue chain is POU class 2 homeobox associating factor 3 (251 aa).

The OCA domain occupies 5–27 (PKVYQGVRVKITVKELLQQRRAH). Positions 24–45 (RRAHQAASGGTRSGGSSVHLSD) are disordered. Over residues 31–40 (SGGTRSGGSS) the composition is skewed to low complexity.

Belongs to the POU2AF family. As to quaternary structure, interacts with POU2F3 in a DNA-dependent manner; this interaction increases POU2F3 transactivation activity. In terms of tissue distribution, expressed in many cell types of epithelial, mesenchymal and hematopoietic origins. Expressed in tufs cells.

It localises to the cytoplasm. It is found in the nucleus. Transcriptional coactivator that specifically associates with POU2F3. This complex drives the development of tuft cells, a rare a rare chemosensory cells that coordinate immune and neural functions within mucosal epithelial tissues. This chain is POU class 2 homeobox associating factor 3, found in Homo sapiens (Human).